Reading from the N-terminus, the 330-residue chain is Malate dehydrogenase (330 aa).

G11 to A17 is a binding site for NAD(+). The substrate site is built by R92 and R98. Residues N105, Q112, and V129–N131 each bind NAD(+). N131 and R162 together coordinate substrate. H187 acts as the Proton acceptor in catalysis.

The protein belongs to the LDH/MDH superfamily. MDH type 2 family.

It carries out the reaction (S)-malate + NAD(+) = oxaloacetate + NADH + H(+). Functionally, catalyzes the reversible oxidation of malate to oxaloacetate. The protein is Malate dehydrogenase of Protochlamydia amoebophila (strain UWE25).